A 214-amino-acid chain; its full sequence is Vascular endothelial growth factor A (214 aa).

A signal peptide spans 1–26; sequence MNFLLSWVHWTLALLLYLHHAKWSQA. Intrachain disulfides connect cysteine 51–cysteine 93, cysteine 82–cysteine 127, and cysteine 86–cysteine 129. An N-linked (GlcNAc...) asparagine glycan is attached at asparagine 100. Residues 131–142 show a composition bias toward basic and acidic residues; it reads PKKDRTKPEKKS. The tract at residues 131–159 is disordered; it reads PKKDRTKPEKKSVRGKGKGQKRKRKKSRF. The span at 143 to 159 shows a compositional bias: basic residues; the sequence is VRGKGKGQKRKRKKSRF.

The protein belongs to the PDGF/VEGF growth factor family. In terms of assembly, homodimer; disulfide-linked. Also found as heterodimer with PGF. Interacts with NRP1. Interacts with isoform 2 of BSG. Interacts with CD82; this interaction inhibits VEGFA-mediated signaling pathway. As to expression, expressed in the pituitary, in brain, in particularly in supraoptic and paraventricular nuclei and the choroid plexus. Also found abundantly in the corpus luteum of the ovary and in kidney glomeruli. Expressed in the ductal epithelial cells of post-pubertal mammary glands. Expressed in the ductal and alveolar epithelial cells throughout the whole period of gestational evolution, lactation and involution.

Its subcellular location is the secreted. Functionally, growth factor active in angiogenesis, vasculogenesis and endothelial cell growth. Induces endothelial cell proliferation, promotes cell migration, inhibits apoptosis and induces permeabilization of blood vessels. Binds to the FLT1/VEGFR1 and KDR/VEGFR2 receptors, heparan sulfate and heparin. May play a role in increasing vascular permeability during lactation, when increased transport of molecules from the blood is required for efficient milk protein synthesis. Binding to NRP1 receptor initiates a signaling pathway needed for motor neuron axon guidance and cell body migration, including for the caudal migration of facial motor neurons from rhombomere 4 to rhombomere 6 during embryonic development. Also binds the DEAR/FBXW7-AS1 receptor. This is Vascular endothelial growth factor A (Vegfa) from Rattus norvegicus (Rat).